The sequence spans 385 residues: 4-hydroxy-3-methylbut-2-en-1-yl diphosphate synthase (flavodoxin) (385 aa).

Residues cysteine 280, cysteine 283, cysteine 315, and glutamate 322 each coordinate [4Fe-4S] cluster.

The protein belongs to the IspG family. Requires [4Fe-4S] cluster as cofactor.

The catalysed reaction is (2E)-4-hydroxy-3-methylbut-2-enyl diphosphate + oxidized [flavodoxin] + H2O + 2 H(+) = 2-C-methyl-D-erythritol 2,4-cyclic diphosphate + reduced [flavodoxin]. It participates in isoprenoid biosynthesis; isopentenyl diphosphate biosynthesis via DXP pathway; isopentenyl diphosphate from 1-deoxy-D-xylulose 5-phosphate: step 5/6. Functionally, converts 2C-methyl-D-erythritol 2,4-cyclodiphosphate (ME-2,4cPP) into 1-hydroxy-2-methyl-2-(E)-butenyl 4-diphosphate. The protein is 4-hydroxy-3-methylbut-2-en-1-yl diphosphate synthase (flavodoxin) of Streptomyces griseus subsp. griseus (strain JCM 4626 / CBS 651.72 / NBRC 13350 / KCC S-0626 / ISP 5235).